The sequence spans 246 residues: Small ribosomal subunit protein uS2 (246 aa).

Belongs to the universal ribosomal protein uS2 family.

This chain is Small ribosomal subunit protein uS2, found in Dictyoglomus thermophilum (strain ATCC 35947 / DSM 3960 / H-6-12).